The following is a 296-amino-acid chain: Probable endonuclease 4 (296 aa).

Residues His-68, His-108, Glu-145, Asp-179, His-182, His-216, Asp-229, His-231, and Glu-261 each contribute to the Zn(2+) site.

This sequence belongs to the AP endonuclease 2 family. The cofactor is Zn(2+).

It carries out the reaction Endonucleolytic cleavage to 5'-phosphooligonucleotide end-products.. In terms of biological role, endonuclease IV plays a role in DNA repair. It cleaves phosphodiester bonds at apurinic or apyrimidinic (AP) sites, generating a 3'-hydroxyl group and a 5'-terminal sugar phosphate. This is Probable endonuclease 4 from Geobacter sulfurreducens (strain ATCC 51573 / DSM 12127 / PCA).